A 396-amino-acid polypeptide reads, in one-letter code: Tyrosine--tRNA ligase (396 aa).

Residues 43 to 52 (PTAPDIHLGH) carry the 'HIGH' region motif. The short motif at 227–231 (KMSKS) is the 'KMSKS' region element. Lysine 230 is an ATP binding site. An S4 RNA-binding domain is found at 335-395 (IGLATLLKEA…GKRKFARVTV (61 aa)).

This sequence belongs to the class-I aminoacyl-tRNA synthetase family. TyrS type 2 subfamily. In terms of assembly, homodimer.

The protein resides in the cytoplasm. It carries out the reaction tRNA(Tyr) + L-tyrosine + ATP = L-tyrosyl-tRNA(Tyr) + AMP + diphosphate + H(+). In terms of biological role, catalyzes the attachment of tyrosine to tRNA(Tyr) in a two-step reaction: tyrosine is first activated by ATP to form Tyr-AMP and then transferred to the acceptor end of tRNA(Tyr). The sequence is that of Tyrosine--tRNA ligase from Haemophilus ducreyi (strain 35000HP / ATCC 700724).